The chain runs to 379 residues: UPF0754 membrane protein ABC1518 (379 aa).

2 helical membrane-spanning segments follow: residues 1 to 21 (MHWI…GAAT) and 358 to 378 (LLGG…VHFF).

Belongs to the UPF0754 family.

The protein resides in the cell membrane. The sequence is that of UPF0754 membrane protein ABC1518 from Shouchella clausii (strain KSM-K16) (Alkalihalobacillus clausii).